A 439-amino-acid polypeptide reads, in one-letter code: Proton pump-interactor 4 (439 aa).

Residues 286-354 (KEEKEIDEET…AKKKKAVCKS (69 aa)) adopt a coiled-coil conformation. The helical transmembrane segment at 415 to 435 (LWVWTVSSAAVALPLALLVVF) threads the bilayer.

It belongs to the plant Proton pump-interactor protein family.

It localises to the cell membrane. The protein localises to the endoplasmic reticulum membrane. May regulate plasma membrane ATPase activity. The sequence is that of Proton pump-interactor 4 (PPI4) from Arabidopsis thaliana (Mouse-ear cress).